The sequence spans 219 residues: Cytidylate kinase (219 aa).

Position 21 to 29 (21 to 29 (GPAASGKGT)) interacts with ATP.

It belongs to the cytidylate kinase family. Type 1 subfamily.

The protein resides in the cytoplasm. It catalyses the reaction CMP + ATP = CDP + ADP. The catalysed reaction is dCMP + ATP = dCDP + ADP. This is Cytidylate kinase from Rickettsia conorii (strain ATCC VR-613 / Malish 7).